A 265-amino-acid chain; its full sequence is Leucyl/phenylalanyl-tRNA--protein transferase (265 aa).

A disordered region spans residues 244 to 265 (LDTGPDPASSSVTEISLRPAAP).

It belongs to the L/F-transferase family.

It is found in the cytoplasm. The catalysed reaction is N-terminal L-lysyl-[protein] + L-leucyl-tRNA(Leu) = N-terminal L-leucyl-L-lysyl-[protein] + tRNA(Leu) + H(+). It catalyses the reaction N-terminal L-arginyl-[protein] + L-leucyl-tRNA(Leu) = N-terminal L-leucyl-L-arginyl-[protein] + tRNA(Leu) + H(+). It carries out the reaction L-phenylalanyl-tRNA(Phe) + an N-terminal L-alpha-aminoacyl-[protein] = an N-terminal L-phenylalanyl-L-alpha-aminoacyl-[protein] + tRNA(Phe). In terms of biological role, functions in the N-end rule pathway of protein degradation where it conjugates Leu, Phe and, less efficiently, Met from aminoacyl-tRNAs to the N-termini of proteins containing an N-terminal arginine or lysine. The sequence is that of Leucyl/phenylalanyl-tRNA--protein transferase from Methylibium petroleiphilum (strain ATCC BAA-1232 / LMG 22953 / PM1).